We begin with the raw amino-acid sequence, 300 residues long: ATP synthase gamma chain (300 aa).

It belongs to the ATPase gamma chain family. F-type ATPases have 2 components, CF(1) - the catalytic core - and CF(0) - the membrane proton channel. CF(1) has five subunits: alpha(3), beta(3), gamma(1), delta(1), epsilon(1). CF(0) has three main subunits: a, b and c.

It localises to the cell membrane. Produces ATP from ADP in the presence of a proton gradient across the membrane. The gamma chain is believed to be important in regulating ATPase activity and the flow of protons through the CF(0) complex. This Acidothermus cellulolyticus (strain ATCC 43068 / DSM 8971 / 11B) protein is ATP synthase gamma chain.